The sequence spans 129 residues: Prefoldin subunit alpha (129 aa).

Belongs to the prefoldin alpha subunit family. In terms of assembly, heterohexamer of two alpha and four beta subunits.

It localises to the cytoplasm. Molecular chaperone capable of stabilizing a range of proteins. Seems to fulfill an ATP-independent, HSP70-like function in archaeal de novo protein folding. In Thermofilum pendens (strain DSM 2475 / Hrk 5), this protein is Prefoldin subunit alpha.